Reading from the N-terminus, the 424-residue chain is Serine--tRNA ligase (424 aa).

232–234 (TAE) is a binding site for L-serine. ATP is bound at residue 263–265 (RQE). An L-serine-binding site is contributed by glutamate 286. 350-353 (EIGS) serves as a coordination point for ATP. Serine 386 provides a ligand contact to L-serine.

Belongs to the class-II aminoacyl-tRNA synthetase family. Type-1 seryl-tRNA synthetase subfamily. In terms of assembly, homodimer. The tRNA molecule binds across the dimer.

It localises to the cytoplasm. The enzyme catalyses tRNA(Ser) + L-serine + ATP = L-seryl-tRNA(Ser) + AMP + diphosphate + H(+). It carries out the reaction tRNA(Sec) + L-serine + ATP = L-seryl-tRNA(Sec) + AMP + diphosphate + H(+). It functions in the pathway aminoacyl-tRNA biosynthesis; selenocysteinyl-tRNA(Sec) biosynthesis; L-seryl-tRNA(Sec) from L-serine and tRNA(Sec): step 1/1. Functionally, catalyzes the attachment of serine to tRNA(Ser). Is also able to aminoacylate tRNA(Sec) with serine, to form the misacylated tRNA L-seryl-tRNA(Sec), which will be further converted into selenocysteinyl-tRNA(Sec). This Aster yellows witches'-broom phytoplasma (strain AYWB) protein is Serine--tRNA ligase.